A 492-amino-acid chain; its full sequence is E3 ubiquitin-protein ligase ARIH2 (492 aa).

Residues 1 to 11 show a composition bias toward polar residues; the sequence is MSVDMNSQGSD. The segment at 1-37 is disordered; that stretch reads MSVDMNSQGSDSNEEDYDPNCEEEEEEEEDPGDIEDY. The segment covering 12–36 has biased composition (acidic residues); it reads SNEEDYDPNCEEEEEEEEDPGDIED. The interval 64–111 is UBA-like; that stretch reads TYKESEGALHEHMTSLASVLKVSHSVAKLILVNFHWQVSEILDRYRSN. A TRIAD supradomain region spans residues 134-343; sequence PPHHCAVCMQ…SEYYECSRYK (210 aa). Zn(2+) contacts are provided by cysteine 138, cysteine 141, cysteine 155, histidine 157, cysteine 160, cysteine 163, cysteine 182, cysteine 187, cysteine 227, cysteine 232, cysteine 248, cysteine 251, cysteine 256, cysteine 259, histidine 264, cysteine 269, cysteine 296, and cysteine 299. The RING-type 1 zinc-finger motif lies at 138–187; it reads CAVCMQFVRKENLLSLACQHQFCRSCWEQHCSVLVKDGVGVGISCMAQDC. Residues 207 to 269 form an IBR-type zinc finger; that stretch reads DKYRRYLFRD…RQMYHAPTDC (63 aa). An RING-type 2; atypical zinc finger spans residues 296–325; it reads CPKCNICIEKNGGCNHMQCSKCKHDFCWMC. Residue cysteine 309 is part of the active site. Zn(2+)-binding residues include cysteine 314, cysteine 317, cysteine 322, cysteine 325, histidine 332, and cysteine 339. The residue at position 352 (serine 352) is a Phosphoserine. The tract at residues 358 to 492 is ariadne domain; the sequence is REALKKYLFY…RTLLKDFHDT (135 aa).

It belongs to the RBR family. Ariadne subfamily. As to quaternary structure, interacts (via RING-type zinc finger 1) with UBE2L3. Interacts (via RING-type zinc finger 2) with UBE2N. Interacts with neddylated CUL5. Interacts (via RING-type 2) with GFI1B. Interacts with GFI1; prevents its ubiquitination and proteasomal degradation. Interacts with DCUN1D1 (via UBA-like domain); promotes DCUN1D1 ubiquitination. In terms of processing, ubiquitinated. Ubiquitination promotes proteasomal degradation.

It is found in the nucleus. The protein resides in the cytoplasm. The enzyme catalyses [E2 ubiquitin-conjugating enzyme]-S-ubiquitinyl-L-cysteine + [acceptor protein]-L-lysine = [E2 ubiquitin-conjugating enzyme]-L-cysteine + [acceptor protein]-N(6)-ubiquitinyl-L-lysine.. The protein operates within protein modification; protein ubiquitination. Its activity is regulated as follows. Autoinhibited by the ariadne domain, which masks the second RING-type zinc finger that contains the active site and inhibits the E3 activity. Inhibition is relieved upon binding to neddylated cullin-RING ubiquitin ligase complexes, which activate the E3 ligase activity of ARIH1. E3 ubiquitin-protein ligase, which catalyzes ubiquitination of target proteins together with ubiquitin-conjugating enzyme E2 UBE2L3. Acts as an atypical E3 ubiquitin-protein ligase by working together with cullin-5-RING ubiquitin ligase complex (ECS complex, also named CRL5 complex) and initiating ubiquitination of ECS substrates: associates with ECS complex and specifically mediates addition of the first ubiquitin on ECS targets. The initial ubiquitin is then elongated. E3 ubiquitin-protein ligase activity is activated upon binding to neddylated form of the ECS complex. Mediates 'Lys-6', 'Lys-48'- and 'Lys-63'-linked polyubiquitination. May play a role in myelopoiesis. The protein is E3 ubiquitin-protein ligase ARIH2 (Arih2) of Mus musculus (Mouse).